Consider the following 352-residue polypeptide: Protein RecA (352 aa).

An ATP-binding site is contributed by 66 to 73 (GPESSGKT).

Belongs to the RecA family.

The protein resides in the cytoplasm. In terms of biological role, can catalyze the hydrolysis of ATP in the presence of single-stranded DNA, the ATP-dependent uptake of single-stranded DNA by duplex DNA, and the ATP-dependent hybridization of homologous single-stranded DNAs. It interacts with LexA causing its activation and leading to its autocatalytic cleavage. This Psychrobacter arcticus (strain DSM 17307 / VKM B-2377 / 273-4) protein is Protein RecA.